Reading from the N-terminus, the 278-residue chain is RsbT co-antagonist protein RsbRD (278 aa).

The 112-residue stretch at 160 to 271 folds into the STAS domain; that stretch reads SAPIMPITDG…QSLAKALANK (112 aa). Thr-181 carries the post-translational modification Phosphothreonine.

Probably present in the stressosome with RsbRA, RsbRB, RsbRC and RsbS. Phosphorylated by RsbT.

One of 4 functionally non-identical RsbR paralogs, it functions in the environmental signaling branch of the general stress response. In terms of biological role, negative regulator of sigma-B activity. Non-phosphorylated RsbS binds to RsbT, preventing its association with RsbU. Requires any one of RsbRA, RsbRB, RsbRC or RsbRD to sequester RsbT. When RsbS and the RsbR paralog(s) are phosphorylated, they release RsbT, which can then bind and activate RsbU. This Bacillus subtilis (strain 168) protein is RsbT co-antagonist protein RsbRD (rsbRD).